The following is a 60-amino-acid chain: UPF0434 protein HCH_02705 (60 aa).

The protein belongs to the UPF0434 family.

The sequence is that of UPF0434 protein HCH_02705 from Hahella chejuensis (strain KCTC 2396).